The chain runs to 735 residues: uncharacterized protein (735 aa).

In terms of domain architecture, GAF spans 25-175 (DLSCLSPDLL…CIAAVLAGLL (151 aa)). The PAS domain occupies 185–255 (SEAARRAMLD…RQGFMRHLAT (71 aa)). In terms of domain architecture, PAC spans 263 to 313 (RLVEVEALRADGSVFPAELTVNEHRAGGRRLFSAFVRDISDRITSRRALER). A GGDEF domain is found at 342 to 464 (GAVVLMLRDL…DGHLLHFAEH (123 aa)). Positions 472–732 (RLELEMALRD…VAGTLPETLA (261 aa)) constitute an EAL domain.

This is an uncharacterized protein from Azorhizobium caulinodans (strain ATCC 43989 / DSM 5975 / JCM 20966 / LMG 6465 / NBRC 14845 / NCIMB 13405 / ORS 571).